The primary structure comprises 393 residues: Calreticulin (393 aa).

Positions 1–16 are cleaved as a signal peptide; sequence MLSILLTLLLSKYALG. The N-linked (GlcNAc...) asparagine glycan is linked to N27. An intrachain disulfide couples C103 to C135. Positions 107, 109, 126, and 133 each coordinate an alpha-D-glucoside. Tandem repeats lie at residues 189 to 200, 208 to 219, 225 to 236, 242 to 253, 257 to 267, 271 to 281, and 285 to 295. Residues 189-253 are 4 X 12 AA approximate repeats; that stretch reads VEEGSLEDDW…DAKKPDDWDD (65 aa). Residues 194–277 form a disordered region; the sequence is LEDDWDMLPP…EYKGEWTPRR (84 aa). The span at 202–216 shows a compositional bias: basic and acidic residues; sequence PPKKIDDPNDKKPDD. Residues 217–226 are compositionally biased toward acidic residues; the sequence is WVDEQFIDDP. Composition is skewed to basic and acidic residues over residues 227-249 and 258-277; these read DDKK…KKPD and EWER…TPRR. The interval 257–295 is 3 X 11 AA approximate repeats; it reads GEWERPQKDNPEYKGEWTPRRIDNPKYKGEWKPVQIDNP. An alpha-D-glucoside is bound at residue D315. Positions 351–393 are disordered; the sequence is AEVAKEQSSAKDDKEEAEETKERKELPYDAKASDEPSGDHDEL. The short motif at 390–393 is the Prevents secretion from ER element; sequence HDEL.

The protein belongs to the calreticulin family.

It localises to the endoplasmic reticulum lumen. In terms of biological role, molecular calcium-binding chaperone promoting folding, oligomeric assembly and quality control in the ER via the calreticulin/calnexin cycle. This lectin may interact transiently with almost all of the monoglucosylated glycoproteins that are synthesized in the ER. The protein is Calreticulin of Schistosoma mansoni (Blood fluke).